The following is a 306-amino-acid chain: Porphobilinogen deaminase (306 aa).

The residue at position 239 (cysteine 239) is an S-(dipyrrolylmethanemethyl)cysteine.

This sequence belongs to the HMBS family. In terms of assembly, monomer. It depends on dipyrromethane as a cofactor.

The catalysed reaction is 4 porphobilinogen + H2O = hydroxymethylbilane + 4 NH4(+). It participates in porphyrin-containing compound metabolism; protoporphyrin-IX biosynthesis; coproporphyrinogen-III from 5-aminolevulinate: step 2/4. Its function is as follows. Tetrapolymerization of the monopyrrole PBG into the hydroxymethylbilane pre-uroporphyrinogen in several discrete steps. In Helicobacter pylori (strain P12), this protein is Porphobilinogen deaminase.